Consider the following 276-residue polypeptide: Rhomboid protease GlpG (276 aa).

6 helical membrane passes run 96–116 (VTWL…IVGA), 142–162 (AFMH…WYIG), 169–189 (LGSG…GYVQ), 192–212 (FSGP…GYAW), 229–249 (LIAF…GMSM), and 250–270 (ANGA…ADTV). Serine 201 (nucleophile) is an active-site residue. The active site involves histidine 254.

This sequence belongs to the peptidase S54 family.

It localises to the cell inner membrane. It carries out the reaction Cleaves type-1 transmembrane domains using a catalytic dyad composed of serine and histidine that are contributed by different transmembrane domains.. Its function is as follows. Rhomboid-type serine protease that catalyzes intramembrane proteolysis. The sequence is that of Rhomboid protease GlpG from Citrobacter koseri (strain ATCC BAA-895 / CDC 4225-83 / SGSC4696).